The primary structure comprises 107 residues: Large ribosomal subunit protein uL24 (107 aa).

The protein belongs to the universal ribosomal protein uL24 family. Part of the 50S ribosomal subunit.

Its function is as follows. One of two assembly initiator proteins, it binds directly to the 5'-end of the 23S rRNA, where it nucleates assembly of the 50S subunit. One of the proteins that surrounds the polypeptide exit tunnel on the outside of the subunit. The polypeptide is Large ribosomal subunit protein uL24 (Nitratidesulfovibrio vulgaris (strain ATCC 29579 / DSM 644 / CCUG 34227 / NCIMB 8303 / VKM B-1760 / Hildenborough) (Desulfovibrio vulgaris)).